The sequence spans 552 residues: Chaperonin GroEL (552 aa).

ATP-binding positions include 30-33, Lys-51, 87-91, Gly-415, and Asp-499; these read TLGP and DGTTT.

Belongs to the chaperonin (HSP60) family. In terms of assembly, forms a cylinder of 14 subunits composed of two heptameric rings stacked back-to-back. Interacts with the co-chaperonin GroES.

Its subcellular location is the cytoplasm. The enzyme catalyses ATP + H2O + a folded polypeptide = ADP + phosphate + an unfolded polypeptide.. Functionally, together with its co-chaperonin GroES, plays an essential role in assisting protein folding. The GroEL-GroES system forms a nano-cage that allows encapsulation of the non-native substrate proteins and provides a physical environment optimized to promote and accelerate protein folding. The polypeptide is Chaperonin GroEL (Hamiltonella defensa subsp. Acyrthosiphon pisum (strain 5AT)).